We begin with the raw amino-acid sequence, 164 residues long: Protein SprT (164 aa).

A SprT-like domain is found at 14–156 (QLAESFFKRP…LCRRCRQTLV (143 aa)). A Zn(2+)-binding site is contributed by His69. The active site involves Glu70. His73 serves as a coordination point for Zn(2+).

Belongs to the SprT family. The cofactor is Zn(2+).

The protein localises to the cytoplasm. The sequence is that of Protein SprT from Pseudomonas fluorescens (strain ATCC BAA-477 / NRRL B-23932 / Pf-5).